Consider the following 197-residue polypeptide: Dephospho-CoA kinase (197 aa).

The DPCK domain occupies 2 to 197 (IIGITGGIAS…SALLSLANPR (196 aa)). 10-15 (ASGKST) is a binding site for ATP.

It belongs to the CoaE family.

Its subcellular location is the cytoplasm. The catalysed reaction is 3'-dephospho-CoA + ATP = ADP + CoA + H(+). Its pathway is cofactor biosynthesis; coenzyme A biosynthesis; CoA from (R)-pantothenate: step 5/5. Its function is as follows. Catalyzes the phosphorylation of the 3'-hydroxyl group of dephosphocoenzyme A to form coenzyme A. This is Dephospho-CoA kinase from Streptococcus pyogenes serotype M28 (strain MGAS6180).